A 294-amino-acid polypeptide reads, in one-letter code: N-acetylmuramic acid 6-phosphate etherase (294 aa).

An SIS domain is found at 56-219 (TSYSLRNGGR…STLSMVSVGK (164 aa)). Residue glutamate 84 is the Proton donor of the active site. Residue glutamate 115 is part of the active site.

Belongs to the GCKR-like family. MurNAc-6-P etherase subfamily. Homodimer.

The enzyme catalyses N-acetyl-D-muramate 6-phosphate + H2O = N-acetyl-D-glucosamine 6-phosphate + (R)-lactate. It functions in the pathway amino-sugar metabolism; 1,6-anhydro-N-acetylmuramate degradation. The protein operates within amino-sugar metabolism; N-acetylmuramate degradation. Its pathway is cell wall biogenesis; peptidoglycan recycling. Its function is as follows. Specifically catalyzes the cleavage of the D-lactyl ether substituent of MurNAc 6-phosphate, producing GlcNAc 6-phosphate and D-lactate. Together with AnmK, is also required for the utilization of anhydro-N-acetylmuramic acid (anhMurNAc) either imported from the medium or derived from its own cell wall murein, and thus plays a role in cell wall recycling. The protein is N-acetylmuramic acid 6-phosphate etherase of Francisella tularensis subsp. holarctica (strain LVS).